The sequence spans 337 residues: Palmitoyltransferase ZDHHC15 (337 aa).

Topologically, residues methionine 1–leucine 20 are cytoplasmic. A helical membrane pass occupies residues serine 21 to phenylalanine 41. Over glutamate 42–isoleucine 56 the chain is Lumenal. A helical membrane pass occupies residues tyrosine 57–phenylalanine 77. Topologically, residues threonine 78 to lysine 172 are cytoplasmic. Positions arginine 129–alanine 179 constitute a DHHC domain. Residues cysteine 131, cysteine 134, histidine 144, cysteine 145, cysteine 148, cysteine 151, and histidine 158 each contribute to the Zn(2+) site. The active-site S-palmitoyl cysteine intermediate is the cysteine 159. Cysteine 165 lines the Zn(2+) pocket. A helical membrane pass occupies residues phenylalanine 173–phenylalanine 193. Topologically, residues serine 194–lysine 210 are lumenal. Residues phenylalanine 211–histidine 234 traverse the membrane as a helical segment. The Cytoplasmic portion of the chain corresponds to cysteine 235–threonine 337. The tract at residues histidine 293–threonine 337 is disordered. Residues glutamate 312–serine 321 are compositionally biased toward acidic residues. Polar residues predominate over residues glycine 327–threonine 337.

It belongs to the DHHC palmitoyltransferase family. Autopalmitoylated (in vitro). Expressed mainly in brain.

Its subcellular location is the golgi apparatus membrane. It is found in the postsynaptic density. It catalyses the reaction L-cysteinyl-[protein] + hexadecanoyl-CoA = S-hexadecanoyl-L-cysteinyl-[protein] + CoA. It carries out the reaction L-cysteinyl-[protein] + tetradecanoyl-CoA = S-tetradecanoyl-L-cysteinyl-[protein] + CoA. The enzyme catalyses L-cysteinyl-[protein] + octadecanoyl-CoA = S-octadecanoyl-L-cysteinyl-[protein] + CoA. Inhibited by 2-bromopalmitate. Its function is as follows. Palmitoyltransferase that catalyzes the addition of palmitate onto various protein substrates. Has no stringent fatty acid selectivity and in addition to palmitate can also transfer onto target proteins myristate from tetradecanoyl-CoA and stearate from octadecanoyl-CoA. Palmitoylates IGF2R and SORT1, promoting their partitioning to an endosomal membrane subdomain where they can interact with the retromer cargo-selective complex. Thereby, regulates retrograde transport from endosomes to the Golgi apparatus of these lysosomal sorting receptors and plays a role in trafficking of lysosomal proteins. In the nervous system, catalyzes the palmitoylation of DLG4/PSD95 and regulates its synaptic clustering and function in synaptogenesis. Could be involved in the differentiation of dopaminergic neurons and the development of the diencephalon. Could also catalyze the palmitoylation of GAP43. Could also palmitoylate DNAJC5 and regulate its localization to the Golgi membrane. Could also palmitoylate FYN as shown in vitro. May palmitoylate CALHM3 subunit of gustatory voltage-gated ion channels and modulate channel gating and kinetics. This chain is Palmitoyltransferase ZDHHC15, found in Mus musculus (Mouse).